We begin with the raw amino-acid sequence, 132 residues long: Small ribosomal subunit protein uS8 (132 aa).

The protein belongs to the universal ribosomal protein uS8 family. Part of the 30S ribosomal subunit. Contacts proteins S5 and S12.

In terms of biological role, one of the primary rRNA binding proteins, it binds directly to 16S rRNA central domain where it helps coordinate assembly of the platform of the 30S subunit. This is Small ribosomal subunit protein uS8 from Anaplasma marginale (strain Florida).